A 543-amino-acid polypeptide reads, in one-letter code: Phosphoribosylaminoimidazole carboxylase (543 aa).

The ATP-grasp domain occupies 110-297; that stretch reads KEHLIKNGIA…QFEAHVRAIT (188 aa). ATP is bound at residue 137–192; the sequence is GAKYGFPYMLKSRTMAYDGRGNFVVKDKSYIPEALKVLDDRPLYAEKWAPFSKELA.

The protein in the C-terminal section; belongs to the AIR carboxylase family. Class I subfamily.

It catalyses the reaction 5-amino-1-(5-phospho-D-ribosyl)imidazole-4-carboxylate + H(+) = 5-amino-1-(5-phospho-beta-D-ribosyl)imidazole + CO2. It functions in the pathway purine metabolism; IMP biosynthesis via de novo pathway; 5-amino-1-(5-phospho-D-ribosyl)imidazole-4-carboxylate from 5-amino-1-(5-phospho-D-ribosyl)imidazole (carboxylase route): step 1/1. This is Phosphoribosylaminoimidazole carboxylase (ADE1) from Ogataea methanolica (Yeast).